A 906-amino-acid polypeptide reads, in one-letter code: Transmembrane channel-like protein 2 (906 aa).

A disordered region spans residues 1-150 (MSHQVKGLKE…SASGGESLSE (150 aa)). The Cytoplasmic segment spans residues 1–263 (MSHQVKGLKE…IFLRWMYGVN (263 aa)). Basic residues predominate over residues 69–79 (PRRKQTGRRRH). The span at 80–127 (REELGEQERGEAERTCEGRRKRDERASFQERTAAPKREKEIPRREEKS) shows a compositional bias: basic and acidic residues. Over residues 135 to 147 (SSSLASSASGGES) the composition is skewed to low complexity. Residues 264–284 (LVLFGLIFGLVIIPEVLMGMP) traverse the membrane as a helical segment. The Extracellular segment spans residues 285–336 (YGSIPRKTVPRAEEEKAMDFSVLWDFEGYIKYSALFYGYYNNQRTIGWLRYR). A helical transmembrane segment spans residues 337 to 357 (LPMAYFMVGVSVFGYSLIIVI). Topologically, residues 358–431 (RSMASNTQGS…NIHLTRFLRV (74 aa)) are cytoplasmic. Residues 432 to 452 (LANFLIICCLCGSGYLIYFVV) form a helical membrane-spanning segment. The Extracellular segment spans residues 453–508 (KRSQQFSKMQNVSWYERNEVEIVMSLLGMFCPPLFETIAALENYHPRTGLKWQLGR). A helical membrane pass occupies residues 509-529 (IFALFLGNLYTFLLALMDDVH). Residues 530–693 (LKLANEETIK…RVFKASRSNN (164 aa)) are Cytoplasmic-facing. A helical membrane pass occupies residues 694-714 (FYMGLLLLVLFLSLLPVAYTI). Over 715-750 (MSLPPSFDCGPFSGKNRMYDVLQETIENDFPTFLGK) the chain is Extracellular. Residues 751–771 (IFAFLANPGLIIPAILLMFLA) form a helical membrane-spanning segment. Residues 772-906 (IYYLNSVSKS…SGKSAQRPPH (135 aa)) lie on the Cytoplasmic side of the membrane. The segment at 800–906 (EKSHKSVKGK…SGKSAQRPPH (107 aa)) is disordered. Composition is skewed to polar residues over residues 820-846 (KSSSKNATQLQLTKEETTPPSASQSQA), 854-866 (PGTSNSASRTTLP), and 886-900 (APSQTHPWRSASGKS).

It belongs to the TMC family. In terms of assembly, forms the MET channel composed of TMC dimer (TMC1 or TMC2), TMIE, TOMT, CIB (CIB2 or CIB3), LHFPL5 and PDH15. The interaction of TMC1 and TMC2 with TOMT is required for the transportation of TMC1/2 into the stereocilia of hair cells. Interacts (via N-terminus) with both isoforms CD1 and CD3 of PCDH15. Can form a heterodimer with TMC1, TMC5 or TMC7. As to expression, detected in fetal cochlea.

Its subcellular location is the cell membrane. The enzyme catalyses Ca(2+)(in) = Ca(2+)(out). In terms of biological role, pore-forming subunit of the mechanotransducer (MET) non-selective cation channel complex located at the tips of stereocilia of cochlear hair cells and that mediates sensory transduction in the auditory system. The MET complex is composed of two dimeric pore-forming ion-conducting transmembrane TMC (TMC1 or TMC2) subunits, and aided by several auxiliary proteins including LHFPL5, TMIE, CIB2/3 and TOMT, and the tip-link PCDH15. MET channel is activated by tension in the tip-link extending from the side wall of one stereocilium to the tip of the adjacent shorter stereocilium, where the channel is located. TMC2 MET channel is highly permeable to calcium and likely transports monovalent cations. Also involved in vestibular hair cell transduction current of the mammalian inner ear. This Homo sapiens (Human) protein is Transmembrane channel-like protein 2.